Reading from the N-terminus, the 1496-residue chain is Chromosome partition protein MukB (1496 aa).

63-70 (GGNGAGKS) is a binding site for ATP. Coiled coils occupy residues 328 to 493 (KLEL…QRLS) and 536 to 632 (KMQA…APAW). Residues 694–811 (PDGSDDVRLN…EVPLFGRAAR (118 aa)) form a flexible hinge region. Coiled-coil stretches lie at residues 861 to 1171 (NPEE…SAEE) and 1235 to 1291 (IDAI…LQNI). Positions 1082 to 1091 (RARSRRDELQ) are enriched in basic and acidic residues. Positions 1082-1101 (RARSRRDELQQRLSQQRSRK) are disordered.

The protein belongs to the SMC family. MukB subfamily. In terms of assembly, homodimerization via its hinge domain. Binds to DNA via its C-terminal region. Interacts, and probably forms a ternary complex, with MukE and MukF via its C-terminal region. The complex formation is stimulated by calcium or magnesium. Interacts with tubulin-related protein FtsZ.

The protein localises to the cytoplasm. Its subcellular location is the nucleoid. Its function is as follows. Plays a central role in chromosome condensation, segregation and cell cycle progression. Functions as a homodimer, which is essential for chromosome partition. Involved in negative DNA supercoiling in vivo, and by this means organize and compact chromosomes. May achieve or facilitate chromosome segregation by condensation DNA from both sides of a centrally located replisome during cell division. The protein is Chromosome partition protein MukB of Actinobacillus pleuropneumoniae serotype 3 (strain JL03).